Reading from the N-terminus, the 394-residue chain is Na(+)/H(+) antiporter NhaA (394 aa).

A run of 11 helical transmembrane segments spans residues 11 to 31 (LEAA…IFAN), 59 to 79 (LLMW…GMEV), 95 to 115 (IFPA…YWFI), 125 to 145 (GWAI…ALLS), 155 to 175 (FLLA…ALFF), 177 to 197 (HEMS…LVAM), 203 to 220 (TGLI…ASVL), 254 to 274 (ALAP…NAGV), 296 to 316 (LIIG…LLGI), 328 to 348 (IFAI…IAGL), and 365 to 385 (LGIL…LKIT).

The protein belongs to the NhaA Na(+)/H(+) (TC 2.A.33) antiporter family.

The protein resides in the cell inner membrane. The enzyme catalyses Na(+)(in) + 2 H(+)(out) = Na(+)(out) + 2 H(+)(in). Its function is as follows. Na(+)/H(+) antiporter that extrudes sodium in exchange for external protons. This chain is Na(+)/H(+) antiporter NhaA, found in Actinobacillus pleuropneumoniae serotype 7 (strain AP76).